We begin with the raw amino-acid sequence, 380 residues long: Actinidain (380 aa).

Positions 1–24 are cleaved as a signal peptide; it reads MGLPKSFVSMSLLFFSTLLILSLA. Positions 25-126 are cleaved as a propeptide — activation peptide; that stretch reads FNAKNLTQRT…NRYEPRVGQV (102 aa). Residues N29, N81, and N111 are each glycosylated (N-linked (GlcNAc...) asparagine). 3 cysteine pairs are disulfide-bonded: C148–C191, C182–C224, and C282–C332. C151 is an active-site residue. Active-site residues include H288 and N308.

It belongs to the peptidase C1 family. As to expression, fruit, present in small cells of the outer pericarp of mature fruit, but not large cells.

The catalysed reaction is Specificity close to that of papain.. In terms of biological role, cysteine protease responsible for the cleavage of kiwellin into kissper and KiTH. The sequence is that of Actinidain from Actinidia deliciosa (Kiwi).